Here is a 56-residue protein sequence, read N- to C-terminus: Large ribosomal subunit protein bL32 (56 aa).

The segment at 1 to 37 (MAVQQNKKSRSKRGMRRSHDALSTAQLSVDATSGELH) is disordered. The segment covering 7 to 16 (KKSRSKRGMR) has biased composition (basic residues). Residues 21-31 (ALSTAQLSVDA) are compositionally biased toward polar residues.

Belongs to the bacterial ribosomal protein bL32 family.

This is Large ribosomal subunit protein bL32 from Shewanella loihica (strain ATCC BAA-1088 / PV-4).